Consider the following 612-residue polypeptide: uncharacterized protein (612 aa).

Disordered regions lie at residues 46–113, 129–185, 313–360, 457–488, and 593–612; these read QQPQ…MVTP, QQYQ…TPTY, TKDG…GSTM, FSIS…SGYG, and NNTN…VVTI. Residues 58-102 are compositionally biased toward low complexity; sequence HQQIPISTQSTPNSTSSTTTTTTTTTSTTTAPTSNSKKSKTTPSN. 2 stretches are compositionally biased toward polar residues: residues 103-113 and 129-138; these read GNKPTSGMVTP and QQYQPNSQLQ. The span at 143–169 shows a compositional bias: low complexity; sequence IIKKSSLSTTPNNINNNNNNNNNTNTI. Polar residues predominate over residues 175–185; the sequence is GGNNSAPTPTY. Over residues 323-359 the composition is skewed to low complexity; the sequence is TTSSTSTSSSATSTTSSSTSSTTTTSSTSNSSTPGST.

This is an uncharacterized protein from Dictyostelium discoideum (Social amoeba).